Reading from the N-terminus, the 407-residue chain is Arginine deiminase (407 aa).

Cys397 acts as the Amidino-cysteine intermediate in catalysis.

It belongs to the arginine deiminase family.

It localises to the cytoplasm. The enzyme catalyses L-arginine + H2O = L-citrulline + NH4(+). The protein operates within amino-acid degradation; L-arginine degradation via ADI pathway; carbamoyl phosphate from L-arginine: step 1/2. This chain is Arginine deiminase, found in Salmonella choleraesuis (strain SC-B67).